A 175-amino-acid chain; its full sequence is Co-chaperone protein HscB homolog (175 aa).

One can recognise a J domain in the interval 7 to 79 (SHFDLFHLPA…LKRATYLLHL (73 aa)).

The protein belongs to the HscB family. In terms of assembly, interacts with HscA and stimulates its ATPase activity.

Functionally, co-chaperone involved in the maturation of iron-sulfur cluster-containing proteins. Seems to help targeting proteins to be folded toward HscA. The chain is Co-chaperone protein HscB homolog from Burkholderia mallei (strain ATCC 23344).